A 315-amino-acid polypeptide reads, in one-letter code: MSIPNLGKKIIVTVPSTTANLGPGFDCLGAALDLYNEFIFTRIEGDGDRFDLIMESTDGNHLRGGPENLVFRAAQKVWESADVSPFALEARVKLAVPPARGLGSSATAIVAGLIGANAIMNSPLPKEKLLELAIDIEGHPDNVVPSLLGGLCLTARSSSQRWRIIRCDWHDSIKAVIAIPAIRLSTSEARRVMPKNIPISDAVTNMGALTLLLNGLKTGNDELIKEGMFDKLHEPYRWKLIKGGLEVKEAALQAGALGCAISGAGPSILALCKSNNGKVVSQAMVKAWENLGIASRAPFLNVQTKGSQFKTISGK.

ATP is bound at residue 97-107; it reads PPARGLGSSAT.

Belongs to the GHMP kinase family. Homoserine kinase subfamily.

Its subcellular location is the cytoplasm. It carries out the reaction L-homoserine + ATP = O-phospho-L-homoserine + ADP + H(+). It functions in the pathway amino-acid biosynthesis; L-threonine biosynthesis; L-threonine from L-aspartate: step 4/5. Catalyzes the ATP-dependent phosphorylation of L-homoserine to L-homoserine phosphate. The protein is Homoserine kinase of Prochlorococcus marinus (strain MIT 9515).